Here is a 478-residue protein sequence, read N- to C-terminus: Calcium/calmodulin-dependent protein kinase type II subunit alpha (478 aa).

The residue at position 13 (Tyr13) is a Phosphotyrosine. Residues 13–271 enclose the Protein kinase domain; that stretch reads YQLFEELGKG…AAEALKHPWI (259 aa). Residues 19–27 and Lys42 contribute to the ATP site; that span reads LGKGAFSVV. Catalysis depends on Asp135, which acts as the Proton acceptor. Residue Ser257 is modified to Phosphoserine. Residue Thr286 is modified to Phosphothreonine; by autocatalysis. A calmodulin-binding region spans residues 290-300; the sequence is LKKFNARRKLK. The interval 310 to 320 is interaction with BAALC; it reads TRNFSGGKSGG. The segment at 314–341 is disordered; the sequence is SGGKSGGNKKNDGVKESSESTNTTIEDE. Positions 322-331 are enriched in basic and acidic residues; that stretch reads KKNDGVKESS. A phosphoserine mark is found at Ser330, Ser331, and Ser333. 2 positions are modified to phosphothreonine: Thr336 and Thr337. Ser404 carries the phosphoserine modification.

The protein belongs to the protein kinase superfamily. CAMK Ser/Thr protein kinase family. CaMK subfamily. As to quaternary structure, there are 4 genes encoding calcium/calmodulin-dependent protein kinase type II chains: CAMK2A, CAMK2B, CAMK2G and CAMK2D. The corresponding proteins assemble into homo- or heteromultimeric holoenzymes composed of 12 subunits with two hexameric rings stacked one on top of the other. Interacts with BAALC. Interacts with MPDZ. Interacts with SYN1. Interacts with CAMK2N2. Interacts with SYNGAP1. Interacts with SYNPO2. Interacts with SHANK3. Interacts with GRIN2B. Interacts with CACNB2. Interacts with LRRC7. Interacts with GRM5. Interacts with DAGLA (via C-terminal); this interaction is enhanced by autophosphorylation of CAMK2A at Thr-286. Interacts with CAMK2N1; this interaction requires CAMK2A activation by Ca(2+). It depends on Mg(2+) as a cofactor. In terms of processing, autophosphorylation of Thr-286 following activation by Ca(2+)/calmodulin. Phosphorylation of Thr-286 locks the kinase into an activated state. Post-translationally, palmitoylated. Probably palmitoylated by ZDHHC3 and ZDHHC7. Expressed in brain. In terms of tissue distribution, expressed in skeletal muscle.

It localises to the cytoplasm. It is found in the synapse. The protein resides in the postsynaptic density. The protein localises to the cell projection. Its subcellular location is the dendritic spine. It localises to the dendrite. It catalyses the reaction L-seryl-[protein] + ATP = O-phospho-L-seryl-[protein] + ADP + H(+). The enzyme catalyses L-threonyl-[protein] + ATP = O-phospho-L-threonyl-[protein] + ADP + H(+). Its activity is regulated as follows. Activated by Ca(2+)/calmodulin. Binding of calmodulin results in conformational change that relieves intrasteric autoinhibition and allows autophosphorylation of Thr-286 which turns the kinase in a constitutively active form and confers to the kinase a Ca(2+)-independent activity. In terms of biological role, calcium/calmodulin-dependent protein kinase that functions autonomously after Ca(2+)/calmodulin-binding and autophosphorylation, and is involved in various processes, such as synaptic plasticity, neurotransmitter release and long-term potentiation. Member of the NMDAR signaling complex in excitatory synapses, it regulates NMDAR-dependent potentiation of the AMPAR and therefore excitatory synaptic transmission. Regulates dendritic spine development. Also regulates the migration of developing neurons. Phosphorylates the transcription factor FOXO3 to activate its transcriptional activity. Phosphorylates the transcription factor ETS1 in response to calcium signaling, thereby decreasing ETS1 affinity for DNA. In response to interferon-gamma (IFN-gamma) stimulation, catalyzes phosphorylation of STAT1, stimulating the JAK-STAT signaling pathway. In response to interferon-beta (IFN-beta) stimulation, stimulates the JAK-STAT signaling pathway. Acts as a negative regulator of 2-arachidonoylglycerol (2-AG)-mediated synaptic signaling via modulation of DAGLA activity. Its function is as follows. Has no kinase activity. This Mus musculus (Mouse) protein is Calcium/calmodulin-dependent protein kinase type II subunit alpha (Camk2a).